The chain runs to 189 residues: Large ribosomal subunit protein eL14 (189 aa).

It belongs to the eukaryotic ribosomal protein eL14 family.

Component of the large ribosomal subunit. The ribosome is a large ribonucleoprotein complex responsible for the synthesis of proteins in the cell. This Trypanosoma brucei brucei protein is Large ribosomal subunit protein eL14.